The primary structure comprises 137 residues: uncharacterized protein (137 aa).

Residues 1-21 form the signal peptide; sequence MFNRRVLFLSVFSCAVFMLSG. C22 is lipidated: N-palmitoyl cysteine. C22 carries S-diacylglycerol cysteine lipidation.

The protein resides in the membrane. This is an uncharacterized protein from Escherichia coli (strain K12).